A 380-amino-acid chain; its full sequence is Succinyl-diaminopimelate desuccinylase (380 aa).

His-69 is a Zn(2+) binding site. Asp-71 is an active-site residue. Residue Asp-102 coordinates Zn(2+). The active-site Proton acceptor is the Glu-135. Residues Glu-136, Glu-164, and His-353 each contribute to the Zn(2+) site.

Belongs to the peptidase M20A family. DapE subfamily. In terms of assembly, homodimer. The cofactor is Zn(2+). Co(2+) serves as cofactor.

It carries out the reaction N-succinyl-(2S,6S)-2,6-diaminopimelate + H2O = (2S,6S)-2,6-diaminopimelate + succinate. It functions in the pathway amino-acid biosynthesis; L-lysine biosynthesis via DAP pathway; LL-2,6-diaminopimelate from (S)-tetrahydrodipicolinate (succinylase route): step 3/3. Its function is as follows. Catalyzes the hydrolysis of N-succinyl-L,L-diaminopimelic acid (SDAP), forming succinate and LL-2,6-diaminopimelate (DAP), an intermediate involved in the bacterial biosynthesis of lysine and meso-diaminopimelic acid, an essential component of bacterial cell walls. The chain is Succinyl-diaminopimelate desuccinylase from Cereibacter sphaeroides (strain KD131 / KCTC 12085) (Rhodobacter sphaeroides).